A 692-amino-acid polypeptide reads, in one-letter code: DNA ligase (692 aa).

Residues 35 to 39, 88 to 89, and Glu117 each bind NAD(+); these read DLVYD and SL. Lys119 acts as the N6-AMP-lysine intermediate in catalysis. Residues Arg140, Glu176, Lys301, and Lys325 each contribute to the NAD(+) site. Zn(2+) is bound by residues Cys416, Cys419, Cys434, and Cys439. Residues 611 to 692 enclose the BRCT domain; sequence LTNQSNSWAS…FDLIKNSKKT (82 aa).

The protein belongs to the NAD-dependent DNA ligase family. LigA subfamily. Mg(2+) serves as cofactor. Requires Mn(2+) as cofactor.

The catalysed reaction is NAD(+) + (deoxyribonucleotide)n-3'-hydroxyl + 5'-phospho-(deoxyribonucleotide)m = (deoxyribonucleotide)n+m + AMP + beta-nicotinamide D-nucleotide.. Its function is as follows. DNA ligase that catalyzes the formation of phosphodiester linkages between 5'-phosphoryl and 3'-hydroxyl groups in double-stranded DNA using NAD as a coenzyme and as the energy source for the reaction. It is essential for DNA replication and repair of damaged DNA. This is DNA ligase from Mesomycoplasma hyopneumoniae (strain 232) (Mycoplasma hyopneumoniae).